Here is a 141-residue protein sequence, read N- to C-terminus: Cholinesterase (141 aa).

N-linked (GlcNAc...) asparagine glycosylation occurs at asparagine 39. 49–50 (GG) provides a ligand contact to substrate. Residue serine 131 is the Acyl-ester intermediate of the active site. Position 131 is a phosphoserine (serine 131).

The protein belongs to the type-B carboxylesterase/lipase family. In terms of assembly, homotetramer; disulfide-linked. Dimer of dimers. In terms of tissue distribution, present in most cells except erythrocytes.

It localises to the secreted. The catalysed reaction is an acylcholine + H2O = a carboxylate + choline + H(+). Its function is as follows. Esterase with broad substrate specificity. Contributes to the inactivation of the neurotransmitter acetylcholine. Can degrade neurotoxic organophosphate esters. This Sus scrofa (Pig) protein is Cholinesterase (BCHE).